The primary structure comprises 806 residues: Enhancer of polycomb-like protein 1 (806 aa).

Disordered regions lie at residues 403–461 and 751–806; these read AITS…QEIG and SLQQ…NAAA. Positions 411–420 are enriched in basic residues; sequence KRAKSSKSSK. Residues 421–439 are compositionally biased toward basic and acidic residues; it reads LHKEDSGLYADEKGSEPKK. Low complexity predominate over residues 751–779; the sequence is SLQQQQMLQKGQQPINNAPHSQSSSPPSH. Residues 785–795 show a composition bias toward polar residues; sequence NPGSTPNQSSP.

Belongs to the enhancer of polycomb family. Component of the NuA4 histone acetyltransferase complex.

The protein localises to the nucleus. Functionally, component of the NuA4 histone acetyltransferase complex which is involved in transcriptional activation of selected genes principally by acetylation of nucleosomal histone H4 and H2A. The NuA4 complex is also involved in DNA repair. Involved in gene silencing by neighboring heterochromatin, blockage of the silencing spreading along the chromosome, and required for cell cycle progression through G2/M. In Kluyveromyces lactis (strain ATCC 8585 / CBS 2359 / DSM 70799 / NBRC 1267 / NRRL Y-1140 / WM37) (Yeast), this protein is Enhancer of polycomb-like protein 1 (EPL1).